A 175-amino-acid chain; its full sequence is Large ribosomal subunit protein uL18 (175 aa).

This sequence belongs to the universal ribosomal protein uL18 family. In terms of assembly, part of the 50S ribosomal subunit. Contacts the 5S and 23S rRNAs.

Functionally, this is one of the proteins that bind and probably mediate the attachment of the 5S RNA into the large ribosomal subunit, where it forms part of the central protuberance. The sequence is that of Large ribosomal subunit protein uL18 from Methanosphaerula palustris (strain ATCC BAA-1556 / DSM 19958 / E1-9c).